Consider the following 324-residue polypeptide: BURP domain-containing protein 5 (324 aa).

A signal peptide spans 1-30 (MCATLCTLLDEISILILMLLLIQLEIRVSA). The 215-residue stretch at 109–323 (FFLETNLQSS…QPDVVVWTRR (215 aa)) folds into the BURP domain.

As to expression, expressed in panicles.

The chain is BURP domain-containing protein 5 (BURP5) from Oryza sativa subsp. japonica (Rice).